The primary structure comprises 243 residues: Proteasome subunit beta (243 aa).

The disordered stretch occupies residues 1–40 (MRTPMNNDISGRPDSLNGDRSDVFSPELGEFPNADDRAND). Residues 1 to 49 (MRTPMNNDISGRPDSLNGDRSDVFSPELGEFPNADDRANDIGDMETKTG) constitute a propeptide, removed in mature form; by autocatalysis. The Nucleophile role is filled by T50.

This sequence belongs to the peptidase T1B family. In terms of assembly, the 20S proteasome core is composed of 14 alpha and 14 beta subunits that assemble into four stacked heptameric rings, resulting in a barrel-shaped structure. The two inner rings, each composed of seven catalytic beta subunits, are sandwiched by two outer rings, each composed of seven alpha subunits. The catalytic chamber with the active sites is on the inside of the barrel. Has a gated structure, the ends of the cylinder being occluded by the N-termini of the alpha-subunits. Is capped at one or both ends by the proteasome regulatory ATPase, PAN.

The protein localises to the cytoplasm. The catalysed reaction is Cleavage of peptide bonds with very broad specificity.. The formation of the proteasomal ATPase PAN-20S proteasome complex, via the docking of the C-termini of PAN into the intersubunit pockets in the alpha-rings, triggers opening of the gate for substrate entry. Interconversion between the open-gate and close-gate conformations leads to a dynamic regulation of the 20S proteasome proteolysis activity. In terms of biological role, component of the proteasome core, a large protease complex with broad specificity involved in protein degradation. The sequence is that of Proteasome subunit beta from Haloquadratum walsbyi (strain DSM 16790 / HBSQ001).